Here is a 266-residue protein sequence, read N- to C-terminus: Metallo-beta-lactamase domain-containing protein 1 (266 aa).

Positions 48 to 71 (LPQTRGPASSHRESPRGSGGAEAA) are disordered. Zn(2+) contacts are provided by H114, H116, D118, H119, H169, D192, and H231. Residues 229–266 (PGHGPPFRVLREASQPETEGGGNSQQEPVVGDEEPALH) are disordered.

The protein belongs to the metallo-beta-lactamase superfamily. Glyoxalase II family. In terms of assembly, homodimer. Requires Zn(2+) as cofactor.

The protein localises to the cytoplasm. Its subcellular location is the cytosol. The protein resides in the nucleus. The enzyme catalyses a ribonucleotidyl-ribonucleotide-RNA + H2O = a 3'-end ribonucleotide-RNA + a 5'-end 5'-phospho-ribonucleoside-RNA + H(+). Functionally, endoribonuclease that catalyzes the hydrolysis of histone-coding pre-mRNA 3'-end. Involved in histone pre-mRNA processing during the S-phase of the cell cycle, which is required for entering/progressing through S-phase. Cleaves histone pre-mRNA at a major and a minor cleavage site after the 5'-ACCCA-3' and the 5'-ACCCACA-3' sequence, respectively, and located downstream of the stem-loop. May require the presence of the HDE element located at the histone pre-RNA 3'-end to avoid non-specific cleavage. In Homo sapiens (Human), this protein is Metallo-beta-lactamase domain-containing protein 1.